The chain runs to 784 residues: DNA repair and recombination protein RAD54-like (784 aa).

The interval 1-54 is disordered; that stretch reads MRRSLAPSQRGPMRPESRHSFTPPLLKKNKRSCQQELEREQELDRKRQSALRDA. The required for chromatin remodeling, strand pairing activities and coupling of ATPase activity stretch occupies residues 2–9; that stretch reads RRSLAPSQ. Ser-20 is modified (phosphoserine). Thr-22 is subject to Phosphothreonine. Basic and acidic residues predominate over residues 36–47; the sequence is ELEREQELDRKR. The Helicase ATP-binding domain occupies 172 to 346; it reads EGKRGNFNGC…YSLVNFVNPE (175 aa). 185–192 is an ATP binding site; the sequence is DEMGLGKT. A DEGH box motif is present at residues 297–300; it reads DEGH. The Helicase C-terminal domain maps to 503 to 660; that stretch reads LLDFMLAAIR…NNESAEKHFT (158 aa). Residues 751-784 are disordered; it reads EEAASEQPEEKPDRRKRPSTPPSDDSADEDFLGF. Residues 775-784 show a composition bias toward acidic residues; sequence DSADEDFLGF.

Belongs to the SNF2/RAD54 helicase family. Interacts (via N-terminus) with spn-A/Rad51.

It is found in the nucleus. Involved in mitotic DNA repair and meiotic recombination. Functions in the recombinational DNA repair pathway. Essential for interhomolog gene conversion (GC), but may have a less important role in intersister GC than spn-A/Rad51. In the presence of DNA, spn-A/Rad51 enhances the ATPase activity of okr/Rad54. The chain is DNA repair and recombination protein RAD54-like from Drosophila yakuba (Fruit fly).